The following is a 692-amino-acid chain: Elongation factor G (692 aa).

Residues 9–284 enclose the tr-type G domain; that stretch reads HMVRNIGIAA…AVVDYLPAPD (276 aa). GTP-binding positions include 18–25, 82–86, and 136–139; these read AHIDAGKT, DTPGH, and NKMD.

It belongs to the TRAFAC class translation factor GTPase superfamily. Classic translation factor GTPase family. EF-G/EF-2 subfamily.

The protein resides in the cytoplasm. In terms of biological role, catalyzes the GTP-dependent ribosomal translocation step during translation elongation. During this step, the ribosome changes from the pre-translocational (PRE) to the post-translocational (POST) state as the newly formed A-site-bound peptidyl-tRNA and P-site-bound deacylated tRNA move to the P and E sites, respectively. Catalyzes the coordinated movement of the two tRNA molecules, the mRNA and conformational changes in the ribosome. The polypeptide is Elongation factor G (Campylobacter curvus (strain 525.92)).